The chain runs to 276 residues: Glutamate racemase (276 aa).

Substrate is bound by residues 10 to 11 (DS) and 42 to 43 (YG). Residue Cys-74 is the Proton donor/acceptor of the active site. Position 75–76 (75–76 (NT)) interacts with substrate. Catalysis depends on Cys-185, which acts as the Proton donor/acceptor. 186 to 187 (TH) is a substrate binding site.

Belongs to the aspartate/glutamate racemases family.

It carries out the reaction L-glutamate = D-glutamate. It functions in the pathway cell wall biogenesis; peptidoglycan biosynthesis. Functionally, provides the (R)-glutamate required for cell wall biosynthesis. The polypeptide is Glutamate racemase (Levilactobacillus brevis (Lactobacillus brevis)).